We begin with the raw amino-acid sequence, 313 residues long: MPFLELTLSCSEVTLPRFQNALDDVGAMAVTMLDANADTSNERALLEPGVGEMPLWDRLTMTALFDGGSDALVVLAALEAFDPGLDWSQVGFRMVEDSDWIRAWIDLFKSMQFGARTFIVPWNQDVPEAANAPDAAVVRLDPGLAFGSGTHQTTALCLRWLDSLAVSGELQGRSVLDFGCGSGILAIAALKLGASHAVGVDYDPQALLATADNAHRNALEAQLAVYMPQDEPVQTYQVVVANILASALSTLADTLAARVVPGGRIALSGILHGQEDELLERYAPWFEQLRCERDDEWMRIEGVRRAASGTQNG.

Residues T154, G179, D201, and N242 each contribute to the S-adenosyl-L-methionine site.

Belongs to the methyltransferase superfamily. PrmA family.

The protein localises to the cytoplasm. It catalyses the reaction L-lysyl-[protein] + 3 S-adenosyl-L-methionine = N(6),N(6),N(6)-trimethyl-L-lysyl-[protein] + 3 S-adenosyl-L-homocysteine + 3 H(+). Methylates ribosomal protein L11. In Xanthomonas oryzae pv. oryzae (strain MAFF 311018), this protein is Ribosomal protein L11 methyltransferase.